A 500-amino-acid polypeptide reads, in one-letter code: Nucleolar and spindle-associated protein 1 (500 aa).

Disordered regions lie at residues 48–204 (KNET…NFKK), 241–299 (TKKS…ASKS), 319–353 (VRFS…PESE), and 365–500 (ELLP…VPVK). Residues 82-92 (THRRGRGRKPI) are compositionally biased toward basic residues. The segment covering 113 to 127 (NMASSIDRTQQQNCT) has biased composition (polar residues). Low complexity predominate over residues 264-274 (SRLSLLSPLPR). Residues 276-298 (TGASPSRTPMSQRRSCRSSTASK) show a composition bias toward polar residues. The segment covering 323-332 (EATKDNEHKR) has biased composition (basic and acidic residues). Residues 380 to 392 (ITLNTTTQPSPAT) show a composition bias toward polar residues. The segment covering 442–451 (PWGESKENKP) has biased composition (basic and acidic residues). Residues 452-469 (DPNSNVSVLKNNYKQPHL) are compositionally biased toward polar residues.

This sequence belongs to the NUSAP family. As to quaternary structure, interacts with DNA, microtubules, ipo7, kpna2 and kpnb1. Microtubule stabilization is inhibited by ipo7 and kpna2, while microtubule bundling is inhibited by kpnb1. Active GTP-bound ran causes dissociation of ipo7 and kpnb1.

The protein resides in the cytoplasm. Its subcellular location is the nucleus. It is found in the cytoskeleton. The protein localises to the spindle. Functionally, microtubule-associated protein with the capacity to bundle and stabilize microtubules. May associate with chromosomes and promote the organization of meiotic or mitotic spindle microtubules around them. The protein is Nucleolar and spindle-associated protein 1 (nusap1) of Xenopus tropicalis (Western clawed frog).